The sequence spans 319 residues: Ribosomal RNA small subunit methyltransferase H (319 aa).

S-adenosyl-L-methionine is bound by residues 34-36 (GGH), Asp-54, Phe-83, Asp-104, and Gln-111.

The protein belongs to the methyltransferase superfamily. RsmH family.

It is found in the cytoplasm. It catalyses the reaction cytidine(1402) in 16S rRNA + S-adenosyl-L-methionine = N(4)-methylcytidine(1402) in 16S rRNA + S-adenosyl-L-homocysteine + H(+). Functionally, specifically methylates the N4 position of cytidine in position 1402 (C1402) of 16S rRNA. The polypeptide is Ribosomal RNA small subunit methyltransferase H (Lactiplantibacillus plantarum (strain ATCC BAA-793 / NCIMB 8826 / WCFS1) (Lactobacillus plantarum)).